The primary structure comprises 513 residues: Histidine ammonia-lyase (513 aa).

The 5-imidazolinone (Ala-Gly) cross-link spans 146-148 (ASG). S147 bears the 2,3-didehydroalanine (Ser) mark.

The protein belongs to the PAL/histidase family. Post-translationally, contains an active site 4-methylidene-imidazol-5-one (MIO), which is formed autocatalytically by cyclization and dehydration of residues Ala-Ser-Gly.

It localises to the cytoplasm. It catalyses the reaction L-histidine = trans-urocanate + NH4(+). The protein operates within amino-acid degradation; L-histidine degradation into L-glutamate; N-formimidoyl-L-glutamate from L-histidine: step 1/3. In Caulobacter vibrioides (strain NA1000 / CB15N) (Caulobacter crescentus), this protein is Histidine ammonia-lyase.